Consider the following 124-residue polypeptide: Small ribosomal subunit protein uS12 (124 aa).

Asp-89 carries the post-translational modification 3-methylthioaspartic acid. The disordered stretch occupies residues 103–124; the sequence is DTAGVKDRRQGRSKYGAKRPKD. Positions 113-124 are enriched in basic residues; sequence GRSKYGAKRPKD.

It belongs to the universal ribosomal protein uS12 family. Part of the 30S ribosomal subunit. Contacts proteins S8 and S17. May interact with IF1 in the 30S initiation complex.

Functionally, with S4 and S5 plays an important role in translational accuracy. Interacts with and stabilizes bases of the 16S rRNA that are involved in tRNA selection in the A site and with the mRNA backbone. Located at the interface of the 30S and 50S subunits, it traverses the body of the 30S subunit contacting proteins on the other side and probably holding the rRNA structure together. The combined cluster of proteins S8, S12 and S17 appears to hold together the shoulder and platform of the 30S subunit. This chain is Small ribosomal subunit protein uS12, found in Acaryochloris marina (strain MBIC 11017).